Consider the following 422-residue polypeptide: UDP-N-acetylglucosamine 1-carboxyvinyltransferase (422 aa).

22–23 (KN) lines the phosphoenolpyruvate pocket. UDP-N-acetyl-alpha-D-glucosamine is bound at residue Arg95. Cys119 (proton donor) is an active-site residue. Cys119 carries the 2-(S-cysteinyl)pyruvic acid O-phosphothioketal modification. UDP-N-acetyl-alpha-D-glucosamine contacts are provided by residues 124–128 (RPIDQ), Asp309, and Val331.

It belongs to the EPSP synthase family. MurA subfamily.

The protein resides in the cytoplasm. It carries out the reaction phosphoenolpyruvate + UDP-N-acetyl-alpha-D-glucosamine = UDP-N-acetyl-3-O-(1-carboxyvinyl)-alpha-D-glucosamine + phosphate. It participates in cell wall biogenesis; peptidoglycan biosynthesis. Cell wall formation. Adds enolpyruvyl to UDP-N-acetylglucosamine. The protein is UDP-N-acetylglucosamine 1-carboxyvinyltransferase of Anaeromyxobacter sp. (strain K).